A 764-amino-acid polypeptide reads, in one-letter code: Acylamino-acid-releasing enzyme (764 aa).

Residues Ser618, Asp707, and His739 each act as charge relay system in the active site.

It belongs to the peptidase S9C family. Homotetramer.

Its subcellular location is the cytoplasm. It localises to the nucleus. The enzyme catalyses Cleavage of an N-acetyl or N-formyl amino acid from the N-terminus of a polypeptide.. Strongly inhibited by the serine protease inhibitor diisopropyl fluorophosphate. In terms of biological role, catalyzes the hydrolysis of the N-terminal peptide bond of an N-acetylated peptide to generate an N-acetylated amino acid and a peptide with a free N-terminus. Can degrade the glycated RuBisCO (ribulose-1,5-bisphosphate carboxylase/oxygenase) protein but not the native protein. May be involved in the elimination of glycated proteins. Plays a homeostatic role in sustaining the cytoplasmic antioxidative system. May contribute to the elimination of the oxidized proteins in the cytoplasm. This chain is Acylamino-acid-releasing enzyme, found in Arabidopsis thaliana (Mouse-ear cress).